Here is a 739-residue protein sequence, read N- to C-terminus: Catalase-peroxidase 1 (739 aa).

Residues 1-33 form a disordered region; the sequence is MPEDRPIEDSPPIGEAQTDAPAGGCPAGFGRIK. The segment at residues 113 to 236 is a cross-link (tryptophyl-tyrosyl-methioninium (Trp-Tyr) (with M-262)); it reads WHAAGTYRVS…LAAVQMGLIY (124 aa). His-114 functions as the Proton acceptor in the catalytic mechanism. The segment at residues 236-262 is a cross-link (tryptophyl-tyrosyl-methioninium (Tyr-Met) (with W-113)); it reads YVNPEGPNGNPDPQASAIDIRETFGRM. His-277 contacts heme b.

Belongs to the peroxidase family. Peroxidase/catalase subfamily. As to quaternary structure, homodimer or homotetramer. The cofactor is heme b. Formation of the three residue Trp-Tyr-Met cross-link is important for the catalase, but not the peroxidase activity of the enzyme.

It carries out the reaction H2O2 + AH2 = A + 2 H2O. The enzyme catalyses 2 H2O2 = O2 + 2 H2O. Functionally, bifunctional enzyme with both catalase and broad-spectrum peroxidase activity. May play a role in the intracellular survival of mycobacteria. This chain is Catalase-peroxidase 1, found in Mycolicibacterium smegmatis (strain ATCC 700084 / mc(2)155) (Mycobacterium smegmatis).